Reading from the N-terminus, the 706-residue chain is Vitamin B12-dependent ribonucleoside-diphosphate reductase (706 aa).

The region spanning 21-109 (AKVRRRDGTL…IYRQRRAELR (89 aa)) is the ATP-cone domain. Residues Ser191, 206–207 (GC), Gly235, 389–393 (NPCGE), and 534–538 (PTGTI) each bind substrate. An intrachain disulfide couples Cys207 to Cys402. The active-site Proton acceptor is Asn389. Catalysis depends on Cys391, which acts as the Cysteine radical intermediate. Catalysis depends on Glu393, which acts as the Proton acceptor.

Belongs to the ribonucleoside diphosphate reductase class-2 family. Requires adenosylcob(III)alamin as cofactor.

It carries out the reaction a 2'-deoxyribonucleoside 5'-diphosphate + [thioredoxin]-disulfide + H2O = a ribonucleoside 5'-diphosphate + [thioredoxin]-dithiol. Functionally, provides the precursors necessary for DNA synthesis. Catalyzes the biosynthesis of deoxyribonucleotides from the corresponding ribonucleotides. In Mycobacterium tuberculosis (strain ATCC 25618 / H37Rv), this protein is Vitamin B12-dependent ribonucleoside-diphosphate reductase (nrdZ).